The chain runs to 66 residues: Large ribosomal subunit protein bL35 (66 aa).

It belongs to the bacterial ribosomal protein bL35 family.

This chain is Large ribosomal subunit protein bL35, found in Parvibaculum lavamentivorans (strain DS-1 / DSM 13023 / NCIMB 13966).